Consider the following 340-residue polypeptide: MRLLERVRKEWFMVGIVVAIGAAKLEPSVGVNGGPLKPEITVSYIAVATIFFNSGLSLKTEELTSALVHLKLHLFIQVFTLAFFPTTIWLFLQLLSVTSINEWLLKGLQTVGCMPPPVSSAVILTKAVGGNEAAAIFNSAFGSFLGIVVTPVLLLLFLGSSSSVPFTSIFSQLFMTVVVPLVIGQIVRRYIKDWLERKKPPFGVVSSSVLLMIIYTTFCDTFSNPNIDLDKFSLILILFIIVSIQLSFMLLTFVFSTRNNSGFTPADTVAIIFCSTHKSLTLGIPMLKIVFAGHEHLSLISLPLLIYHPAQILLGSVLVPTIKSWMVSRQKGVKLTRPTV.

At 1–10 the chain is on the cytoplasmic side; sequence MRLLERVRKE. A helical membrane pass occupies residues 11-31; that stretch reads WFMVGIVVAIGAAKLEPSVGV. Over 32–37 the chain is Extracellular; it reads NGGPLK. A helical transmembrane segment spans residues 38-58; that stretch reads PEITVSYIAVATIFFNSGLSL. Residues 59 to 71 lie on the Cytoplasmic side of the membrane; the sequence is KTEELTSALVHLK. The helical transmembrane segment at 72 to 92 threads the bilayer; sequence LHLFIQVFTLAFFPTTIWLFL. Over 93–116 the chain is Extracellular; that stretch reads QLLSVTSINEWLLKGLQTVGCMPP. The chain crosses the membrane as a helical span at residues 117–137; the sequence is PVSSAVILTKAVGGNEAAAIF. Residue N138 is a topological domain, cytoplasmic. Residues 139 to 159 traverse the membrane as a helical segment; sequence SAFGSFLGIVVTPVLLLLFLG. Over 160–163 the chain is Extracellular; sequence SSSS. Residues 164-184 form a helical membrane-spanning segment; sequence VPFTSIFSQLFMTVVVPLVIG. The Cytoplasmic portion of the chain corresponds to 185-201; it reads QIVRRYIKDWLERKKPP. The chain crosses the membrane as a helical span at residues 202-222; the sequence is FGVVSSSVLLMIIYTTFCDTF. Topologically, residues 223–234 are extracellular; that stretch reads SNPNIDLDKFSL. A helical transmembrane segment spans residues 235–255; the sequence is ILILFIIVSIQLSFMLLTFVF. Residues 256 to 270 lie on the Cytoplasmic side of the membrane; it reads STRNNSGFTPADTVA. Residues 271–291 traverse the membrane as a helical segment; the sequence is IIFCSTHKSLTLGIPMLKIVF. At 292-298 the chain is on the extracellular side; that stretch reads AGHEHLS. Residues 299 to 319 traverse the membrane as a helical segment; sequence LISLPLLIYHPAQILLGSVLV. Over 320-340 the chain is Cytoplasmic; it reads PTIKSWMVSRQKGVKLTRPTV.

It belongs to the bile acid:sodium symporter (BASS) (TC 2.A.28) family. As to expression, strongly expressed in liver, adrenal gland, small intestine and colon. Moderately expressed in heart, lung, kidney and spleen. Weakly expressed in brain.

The protein localises to the cell membrane. It is found in the endoplasmic reticulum membrane. Its subcellular location is the golgi apparatus membrane. In terms of biological role, involved in teeth and skeletal development. Has an essential role in the biosynthesis and trafficking of glycosaminoglycans and glycoproteins to produce a proper functioning extracellular matrix. Required for extracellular matrix mineralization. Also involved in the regulation of cellular calcium homeostasis. Does not show transport activity towards bile acids or steroid sulfates (including taurocholate, cholate, chenodeoxycholate, estrone-3-sulfate, dehydroepiandrosterone sulfate (DHEAS) and pregnenolone sulfate). The chain is Sodium/bile acid cotransporter 7 (Slc10a7) from Rattus norvegicus (Rat).